We begin with the raw amino-acid sequence, 419 residues long: MAGDFSNRAPWKRSACDRCRAQKLRCHRDSGHSTDACLRCLKSGIECVTSKARPTGRPPSRQVQPTVVVEQGDTSSSSHTTDSSPSAGGTDMSNMMNFEYDLSLDNILDSIGMQHSDFIVNDNILVDISPLSSSQSTSQHSVAQAQAQTVDPSTIQSTASYQFNTLPSTSSMDSALPMRSDHVELLLSRLHSKLSAQLYSIRSSPWDVKGTLNLSLAHQGIGQDFENCESHPLVQVSQACTELERLLSGLRAPASAEHTPSTFSYTPAVPPRLRITQLLIALSCYIQIVSIYGIIFSKVFDYLLSTSKTSVGSYQSSPLTLYIGGLPIPPNETLSGNLLVHLIEHQLHQIEQLMGLPEHYRVSSRAKDTKDGELGLFGSQHSQSLLNAAIQLGEDRDGNHDDIRCVRALKIVMRQIKDF.

The segment at residues 16–47 (CDRCRAQKLRCHRDSGHSTDACLRCLKSGIEC) is a DNA-binding region (zn(2)-C6 fungal-type). A disordered region spans residues 50–92 (SKARPTGRPPSRQVQPTVVVEQGDTSSSSHTTDSSPSAGGTDM). The segment covering 74–86 (TSSSSHTTDSSPS) has biased composition (low complexity).

Its subcellular location is the nucleus. Its function is as follows. Transcription factor that regulates the expression of the gene cluster that mediates the biosynthesis of fusaric acid, a mycotoxin with low to moderate toxicity to animals and humans, but with high phytotoxic properties. This Gibberella fujikuroi (strain CBS 195.34 / IMI 58289 / NRRL A-6831) (Bakanae and foot rot disease fungus) protein is Fusaric acid cluster transcription factor FUB10.